A 746-amino-acid polypeptide reads, in one-letter code: NAD(P)H-quinone oxidoreductase subunit 5, chloroplastic (746 aa).

Transmembrane regions (helical) follow at residues 9–29 (WIIPFIPLPVPILLGVGLLLF), 40–60 (WTFLSIFLLSIVMIFSLYLSI), 89–109 (IDPLTSIMLILITTVGILVLI), 125–145 (FAYMGFFNTSMLGLVTSSNLI), 147–167 (VYFFWELVGMCSYLLIGFWFT), 185–205 (GDFGLLLGILGLYWITGSFEF), 221–241 (VNLLFFTLCAFLLFVGPIAKS), 258–278 (TPISALIHAATMVAAGIFLVA), 280–300 (LLPIFIVIPSIMYIISLIGII), 327–347 (LGYMMLALGMGSYRAALFHLI), 354–374 (ALLFLGSGSIIHSMEAIVGYS), 396–416 (TAFLVGTLSLCGIPPLACFWS), 425–445 (FLFSPIFAIIACSTAGLTAFY), 547–567 (ILFPMLLLLLFTLFVGAIGIP), 608–628 (FSVSIALFGIFIAYCLYKPFY), and 723–743 (YLFLYLSYVLIFLTILFFFYF).

It belongs to the complex I subunit 5 family. In terms of assembly, NDH is composed of at least 16 different subunits, 5 of which are encoded in the nucleus.

The protein resides in the plastid. Its subcellular location is the chloroplast thylakoid membrane. The enzyme catalyses a plastoquinone + NADH + (n+1) H(+)(in) = a plastoquinol + NAD(+) + n H(+)(out). The catalysed reaction is a plastoquinone + NADPH + (n+1) H(+)(in) = a plastoquinol + NADP(+) + n H(+)(out). NDH shuttles electrons from NAD(P)H:plastoquinone, via FMN and iron-sulfur (Fe-S) centers, to quinones in the photosynthetic chain and possibly in a chloroplast respiratory chain. The immediate electron acceptor for the enzyme in this species is believed to be plastoquinone. Couples the redox reaction to proton translocation, and thus conserves the redox energy in a proton gradient. The sequence is that of NAD(P)H-quinone oxidoreductase subunit 5, chloroplastic (ndhF) from Lobularia maritima (Sweet alyssum).